Reading from the N-terminus, the 466-residue chain is Bifunctional protein GlmU (466 aa).

The tract at residues M1–R233 is pyrophosphorylase. Residues L11–G14, K25, Q79, and G84–T85 contribute to the UDP-N-acetyl-alpha-D-glucosamine site. D108 serves as a coordination point for Mg(2+). UDP-N-acetyl-alpha-D-glucosamine contacts are provided by G143, E158, N173, and N231. N231 lines the Mg(2+) pocket. The tract at residues A234–Q254 is linker. Residues G255–A466 are N-acetyltransferase. The UDP-N-acetyl-alpha-D-glucosamine site is built by R337 and K355. H367 (proton acceptor) is an active-site residue. 2 residues coordinate UDP-N-acetyl-alpha-D-glucosamine: Y370 and N381. Acetyl-CoA-binding positions include A384, N390–Y391, S409, A427, and R444.

This sequence in the N-terminal section; belongs to the N-acetylglucosamine-1-phosphate uridyltransferase family. The protein in the C-terminal section; belongs to the transferase hexapeptide repeat family. Homotrimer. Mg(2+) serves as cofactor.

It is found in the cytoplasm. It carries out the reaction alpha-D-glucosamine 1-phosphate + acetyl-CoA = N-acetyl-alpha-D-glucosamine 1-phosphate + CoA + H(+). The catalysed reaction is N-acetyl-alpha-D-glucosamine 1-phosphate + UTP + H(+) = UDP-N-acetyl-alpha-D-glucosamine + diphosphate. It functions in the pathway nucleotide-sugar biosynthesis; UDP-N-acetyl-alpha-D-glucosamine biosynthesis; N-acetyl-alpha-D-glucosamine 1-phosphate from alpha-D-glucosamine 6-phosphate (route II): step 2/2. The protein operates within nucleotide-sugar biosynthesis; UDP-N-acetyl-alpha-D-glucosamine biosynthesis; UDP-N-acetyl-alpha-D-glucosamine from N-acetyl-alpha-D-glucosamine 1-phosphate: step 1/1. It participates in bacterial outer membrane biogenesis; LPS lipid A biosynthesis. In terms of biological role, catalyzes the last two sequential reactions in the de novo biosynthetic pathway for UDP-N-acetylglucosamine (UDP-GlcNAc). The C-terminal domain catalyzes the transfer of acetyl group from acetyl coenzyme A to glucosamine-1-phosphate (GlcN-1-P) to produce N-acetylglucosamine-1-phosphate (GlcNAc-1-P), which is converted into UDP-GlcNAc by the transfer of uridine 5-monophosphate (from uridine 5-triphosphate), a reaction catalyzed by the N-terminal domain. In Dichelobacter nodosus (strain VCS1703A), this protein is Bifunctional protein GlmU.